Consider the following 292-residue polypeptide: Small ribosomal subunit protein uS5 (292 aa).

The interval 1–56 (MADDAGAAGGPGGPGGPGMGGRGGFRGGFGSGIRGRGRGRGRGRGRGRGARGGKAE) is disordered. A2 bears the N-acetylalanine mark. Gly residues predominate over residues 7–34 (AAGGPGGPGGPGMGGRGGFRGGFGSGIR). Basic residues predominate over residues 35–51 (GRGRGRGRGRGRGRGAR). Residues K54 and K58 each participate in a glycyl lysine isopeptide (Lys-Gly) (interchain with G-Cter in ubiquitin) cross-link. One can recognise an S5 DRBM domain in the interval 102–165 (LKDEVLKIMP…ILAKLSIVPV (64 aa)). Phosphothreonine is present on T251. K262 is subject to N6-acetyllysine. Residue S263 is modified to Phosphoserine. T269 bears the Phosphothreonine mark. N6-acetyllysine; alternate is present on K274. K274 participates in a covalent cross-link: Glycyl lysine isopeptide (Lys-Gly) (interchain with G-Cter in SUMO1); alternate. A Glycyl lysine isopeptide (Lys-Gly) (interchain with G-Cter in SUMO2); alternate cross-link involves residue K274. Residue K274 forms a Glycyl lysine isopeptide (Lys-Gly) (interchain with G-Cter in ubiquitin); alternate linkage. S280 carries the post-translational modification Phosphoserine.

This sequence belongs to the universal ribosomal protein uS5 family. As to quaternary structure, component of the small ribosomal subunit. Interacts with zinc finger protein ZNF277 (via zinc-finger domains); the interaction is direct; the interaction is extra-ribosomal. Interaction with ZNF277 competes with the binding of RPS2 to protein arginine methyltransferase PRMT3. Post-translationally, citrullinated by PADI4 in the Arg/Gly-rich region. In terms of processing, asymmetric arginine dimethylation by PRMT3 occurs at multiple sites in the Arg/Gly-rich region. Monoubiquitinated at Lys-54 and Lys-58 by RNF10 when a ribosome has stalled during translation, leading to its degradation by the proteasome. Deubiquitinated at Lys-54 and Lys-58 by USP10, preventing degradation by the proteasome and promoting 40S ribosome subunit recycling following ribosome dissociation.

The protein localises to the cytoplasm. It is found in the nucleus. It localises to the nucleolus. Its function is as follows. Component of the ribosome, a large ribonucleoprotein complex responsible for the synthesis of proteins in the cell. The small ribosomal subunit (SSU) binds messenger RNAs (mRNAs) and translates the encoded message by selecting cognate aminoacyl-transfer RNA (tRNA) molecules. The large subunit (LSU) contains the ribosomal catalytic site termed the peptidyl transferase center (PTC), which catalyzes the formation of peptide bonds, thereby polymerizing the amino acids delivered by tRNAs into a polypeptide chain. The nascent polypeptides leave the ribosome through a tunnel in the LSU and interact with protein factors that function in enzymatic processing, targeting, and the membrane insertion of nascent chains at the exit of the ribosomal tunnel. Plays a role in the assembly and function of the 40S ribosomal subunit. This Oryctolagus cuniculus (Rabbit) protein is Small ribosomal subunit protein uS5 (RPS2).